A 144-amino-acid chain; its full sequence is Maximins 7/H6 (144 aa).

Residues 1–18 form the signal peptide; that stretch reads MNFKYIVAVSFLIASAYA. Residues 19–43 constitute a propeptide that is removed on maturation; that stretch reads RSEENDEQSLSQRDILEEESLREIR. Asparagine amide is present on asparagine 70. A propeptide spanning residues 74 to 123 is cleaved from the precursor; that stretch reads TAEDHEVMKRLEAVMRDLDSLDYPEEAAERETRGFNQEEIANLFTKKEKR. Residue leucine 143 is modified to Leucine amide.

The protein belongs to the bombinin family. Expressed by the skin glands.

It is found in the secreted. Its function is as follows. Maximin-7 shows antimicrobial activity against bacteria and against the fungus C.albicans. It has little hemolytic activity. Functionally, maximin-H6 shows antimicrobial activity against bacteria and against the fungus C.albicans. Shows strong hemolytic activity. This chain is Maximins 7/H6, found in Bombina maxima (Giant fire-bellied toad).